We begin with the raw amino-acid sequence, 242 residues long: Ribosomal RNA large subunit methyltransferase E (242 aa).

5 residues coordinate S-adenosyl-L-methionine: G88, W90, D111, D127, and D151. The active-site Proton acceptor is K191.

This sequence belongs to the class I-like SAM-binding methyltransferase superfamily. RNA methyltransferase RlmE family.

Its subcellular location is the cytoplasm. The enzyme catalyses uridine(2552) in 23S rRNA + S-adenosyl-L-methionine = 2'-O-methyluridine(2552) in 23S rRNA + S-adenosyl-L-homocysteine + H(+). Its function is as follows. Specifically methylates the uridine in position 2552 of 23S rRNA at the 2'-O position of the ribose in the fully assembled 50S ribosomal subunit. The chain is Ribosomal RNA large subunit methyltransferase E from Bartonella tribocorum (strain CIP 105476 / IBS 506).